We begin with the raw amino-acid sequence, 308 residues long: Ribosomal RNA small subunit methyltransferase H (308 aa).

Residues 36 to 38 (GGH), aspartate 55, phenylalanine 86, aspartate 103, and glutamine 110 contribute to the S-adenosyl-L-methionine site.

Belongs to the methyltransferase superfamily. RsmH family.

The protein resides in the cytoplasm. It carries out the reaction cytidine(1402) in 16S rRNA + S-adenosyl-L-methionine = N(4)-methylcytidine(1402) in 16S rRNA + S-adenosyl-L-homocysteine + H(+). In terms of biological role, specifically methylates the N4 position of cytidine in position 1402 (C1402) of 16S rRNA. The chain is Ribosomal RNA small subunit methyltransferase H from Helicobacter pylori (strain P12).